The sequence spans 148 residues: Arginine repressor (148 aa).

It belongs to the ArgR family.

It localises to the cytoplasm. It functions in the pathway amino-acid biosynthesis; L-arginine biosynthesis [regulation]. Its function is as follows. Regulates arginine biosynthesis genes. In Streptococcus pneumoniae serotype 4 (strain ATCC BAA-334 / TIGR4), this protein is Arginine repressor (argR).